The chain runs to 199 residues: Charged multivesicular body protein 1b (199 aa).

Residues 26–48 are a coiled coil; that stretch reads DKEEKAEKAKIKKAIQKGNMEVA. The tract at residues 132 to 156 is interaction with IST1; it reads MEDTMSSTTTLTTPQGQVDMLLQEM. The disordered stretch occupies residues 167–199; the sequence is ELPQGQTGSVGTSVASAEQDELSQRLARLRDQV. The segment covering 170–182 has biased composition (polar residues); it reads QGQTGSVGTSVAS. Residues 174-199 are interaction with SPAST; it reads GSVGTSVASAEQDELSQRLARLRDQV. Residues 178 to 199 are a coiled coil; sequence TSVASAEQDELSQRLARLRDQV. The interaction with VPS4A, MITD1 and STAMBP stretch occupies residues 180–196; sequence VASAEQDELSQRLARLR. The interval 180 to 199 is interaction with VTA1; it reads VASAEQDELSQRLARLRDQV. The segment at 183 to 199 is interaction with VPS4B; that stretch reads AEQDELSQRLARLRDQV. The MIT-interacting motif motif lies at 186 to 196; sequence DELSQRLARLR.

Belongs to the SNF7 family. Probable peripherally associated component of the endosomal sorting required for transport complex III (ESCRT-III). ESCRT-III components are thought to multimerize to form a flat lattice on the perimeter membrane of the endosome. Several assembly forms of ESCRT-III may exist that interact and act sequentially. Interacts with CHMP1A. Interacts with VTA1; the interaction probably involves the open conformation of CHMP1B. Interacts with CHMP2A. Interacts with VPS4A; the interaction is direct. Interacts with VPS4B; the interaction is direct. Interacts with SPAST (via MIT domain); the interaction is direct. Interacts with IST1. Interacts with MITD1. Interacts with STAMBP.

The protein resides in the cytoplasm. It is found in the cytosol. It localises to the endosome. The protein localises to the late endosome membrane. In terms of biological role, probable peripherally associated component of the endosomal sorting required for transport complex III (ESCRT-III) which is involved in multivesicular bodies (MVBs) formation and sorting of endosomal cargo proteins into MVBs. MVBs contain intraluminal vesicles (ILVs) that are generated by invagination and scission from the limiting membrane of the endosome and mostly are delivered to lysosomes enabling degradation of membrane proteins, such as stimulated growth factor receptors, lysosomal enzymes and lipids. The MVB pathway appears to require the sequential function of ESCRT-O, -I,-II and -III complexes. ESCRT-III proteins mostly dissociate from the invaginating membrane before the ILV is released. The ESCRT machinery also functions in topologically equivalent membrane fission events, such as the terminal stages of cytokinesis and the budding of enveloped viruses (lentiviruses). ESCRT-III proteins are believed to mediate the necessary vesicle extrusion and/or membrane fission activities, possibly in conjunction with the AAA ATPase VPS4. Involved in cytokinesis. Involved in recruiting VPS4A and/or VPS4B and SPAST to the midbody of dividing cells. This Bos taurus (Bovine) protein is Charged multivesicular body protein 1b (CHMP1B).